We begin with the raw amino-acid sequence, 283 residues long: Protein BASIC PENTACYSTEINE1 (283 aa).

The segment at 111–170 is disordered; sequence RFEENPIPPPAPCEEQTGKKRKMRGSIATPTVPKAKKMRKPKEERDVTNNNVQQQQQRVK. Low complexity predominate over residues 158–169; sequence TNNNVQQQQQRV.

The protein belongs to the BBR/BPC family. Expressed in seedlings, leaves and pistils. Detected in the base of flowers and tips of carpels, in leaf and sepal vasculature, in young rosette, in the lateral and tip of primary roots, and in the whole ovule.

Its subcellular location is the nucleus. In terms of biological role, transcriptional regulator that specifically binds to GA-rich elements (GAGA-repeats) present in regulatory sequences of genes involved in developmental processes. Negatively regulates the homeotic gene AGL11/STK, which controls ovule primordium identity, by a cooperative binding to purine-rich elements present in the regulatory sequence leading to DNA conformational changes. This chain is Protein BASIC PENTACYSTEINE1 (BPC1), found in Arabidopsis thaliana (Mouse-ear cress).